The following is a 217-amino-acid chain: Adenylate kinase (217 aa).

10–15 is a binding site for ATP; it reads GAGKGT. Residues 30 to 59 form an NMP region; sequence STGDMFREAIKRGTPLGRQAEVYIKGGRLV. Residues T31, R36, 57–59, 85–88, and Q92 each bind AMP; these read RLV and GFPR. Positions 126-163 are LID; the sequence is GRRVCRQCGATYHVRYNPPAVPGKCDACGQDLVQRADD. R127 provides a ligand contact to ATP. Zn(2+) is bound by residues C130 and C133. 136-137 is a binding site for ATP; it reads TY. Positions 150 and 153 each coordinate Zn(2+). AMP is bound by residues R160 and R171. ATP is bound at residue Q199.

It belongs to the adenylate kinase family. Monomer.

Its subcellular location is the cytoplasm. It catalyses the reaction AMP + ATP = 2 ADP. The protein operates within purine metabolism; AMP biosynthesis via salvage pathway; AMP from ADP: step 1/1. Catalyzes the reversible transfer of the terminal phosphate group between ATP and AMP. Plays an important role in cellular energy homeostasis and in adenine nucleotide metabolism. This is Adenylate kinase from Moorella thermoacetica (strain ATCC 39073 / JCM 9320).